The sequence spans 447 residues: Argininosuccinate synthase (447 aa).

ATP contacts are provided by residues 17–25 (AFSGGLDTS) and A43. Residue Y99 coordinates L-citrulline. ATP contacts are provided by G129 and T131. L-aspartate is bound by residues T131, N135, and D136. N135 contacts L-citrulline. D136 serves as a coordination point for ATP. L-citrulline contacts are provided by R139 and S192. Position 194 (D194) interacts with ATP. Positions 201, 203, and 280 each coordinate L-citrulline.

Belongs to the argininosuccinate synthase family. Type 2 subfamily. Homotetramer.

The protein resides in the cytoplasm. The catalysed reaction is L-citrulline + L-aspartate + ATP = 2-(N(omega)-L-arginino)succinate + AMP + diphosphate + H(+). Its pathway is amino-acid biosynthesis; L-arginine biosynthesis; L-arginine from L-ornithine and carbamoyl phosphate: step 2/3. This Salmonella paratyphi B (strain ATCC BAA-1250 / SPB7) protein is Argininosuccinate synthase.